A 1366-amino-acid chain; its full sequence is Serine/threonine-protein kinase RUNKEL (1366 aa).

ATP contacts are provided by residues 10-18 and K33; that span reads IGHGKCSTV. The active-site Proton acceptor is D121. Disordered regions lie at residues 276–356, 367–386, 398–502, and 524–549; these read TKPC…VNIL, QKEN…NENC, LDFD…DSSK, and PSRK…FSKK. Residues 283-302 show a composition bias toward basic and acidic residues; sequence RNGDRPNKTPPKYREKDRKG. Residues 304 to 313 show a composition bias toward polar residues; it reads SKQNENSIQG. Residues 367–376 are compositionally biased toward basic and acidic residues; that stretch reads QKENEKENYR. A compositionally biased stretch (acidic residues) spans 398-414; that stretch reads LDFDENNDDEGPDESEG. Residues 422–433 show a composition bias toward basic and acidic residues; it reads QEERVMSHNENH. The span at 438–454 shows a compositional bias: polar residues; sequence VVSSNVPDENSSANETP. 12 HEAT repeats span residues 595-633, 638-675, 699-737, 835-872, 878-907, 908-945, 946-986, 992-1018, 1019-1057, 1072-1111, 1279-1316, and 1329-1366; these read LTNG…HSTS, LANS…YIST, QVSN…QGAY, TEEK…NSRR, FCNA…AFVN, VIAS…RAPV, KTNA…LVEA, DDFR…NGEI, IIRE…LLTE, ISNS…IKIS, TNLP…YACK, and GHDV…RLPR.

Belongs to the protein kinase superfamily. Ser/Thr protein kinase family. Binds to microtubules (MT). As to expression, expressed in proliferating tissues of seedlings, lateral roots, young rosette leaves, siliques, flowers, embryos and stems (including apical meristem).

The protein resides in the cytoplasm. It is found in the cytoskeleton. The protein localises to the phragmoplast. Its subcellular location is the spindle. It catalyses the reaction L-seryl-[protein] + ATP = O-phospho-L-seryl-[protein] + ADP + H(+). The enzyme catalyses L-threonyl-[protein] + ATP = O-phospho-L-threonyl-[protein] + ADP + H(+). In terms of biological role, essential protein that regulates phragmoplast microtubule organization during cell plate expansion in cytokinesis during cell division, both somatic and syncytial. Required for endosperm cellularisation. In pollen development, involved in cellularisation during microsporogenesis by regulating radial microtubules (MT) organization in microspore mother cells. Seems to not have kinase activity. The sequence is that of Serine/threonine-protein kinase RUNKEL from Arabidopsis thaliana (Mouse-ear cress).